The primary structure comprises 424 residues: Glucan endo-1,3-alpha-glucosidase agn1 (424 aa).

The first 20 residues, 1–20 (MKLVLFLVLLFSALINLTNA), serve as a signal peptide directing secretion.

This sequence belongs to the glycosyl hydrolase 71 family. In terms of assembly, monomer. Not glycosylated.

The protein resides in the secreted. It is found in the cell wall. It catalyses the reaction Endohydrolysis of (1-&gt;3)-alpha-D-glucosidic linkages in isolichenin, pseudonigeran and nigeran.. Functionally, has a role in cell separation where it is required for the degradation of the cell wall material surrounding the septum (the septum edging) which must be hydrolyzed before full separation of the daughter cells can occur. Hydrolyzes 1,3-alpha-glucan predominantly into pentasaccharides. The polypeptide is Glucan endo-1,3-alpha-glucosidase agn1 (agn1) (Schizosaccharomyces pombe (strain 972 / ATCC 24843) (Fission yeast)).